The following is a 594-amino-acid chain: MPAHDDDIREGAGRSARGSDDLAAQVTYLEQEIAVLRRRLRDAADAPRGGRAVEERINELQATVAGLTSQNERLVATLREARDQIVALKEEIDRLAQPPSGFGVFLEDVGEGNADIFTGGRKMRVSVSPSIEGGTLRPGQEVMLNEALNVVAAFGFESVGEIVSLKEILEDGSRALVTGRTDEEHVVRLAEPLLESGVKLRPGDALLMEPRSGYVYEVIPKSEVEDLVLEEVPDISYLEIGGLDGQIELIRDAVELPYLHPDLFKEHKLRPPKGVLLYGPPGCGKTLIAKAVANSLAKKVAEVTGSDNVKSYFLNIKGPELLNKYVGETERHIRLVFQRAREKASEGAPVIVFFDEMDSLFRTRGSGISSDVENTIVPQLLSEIDGVEGLENVIVIGASNREDMIDPAILRPGRLDVKIKIERPDAEAAKDIFGKYVTTELPLHADDLAEHSGDRQETVTAMIQATVERMYSEIDENRFLEVTYANGDKEVMYFRDFNSGAMIQNIVDRAKKSAIKDFLDHKQKGLRVSHLLGACVDEFKENEDLPNTTNPDDWARISGKKGERIVFIRTLVTGKRGGDTGRSIDTIASTGQYL.

Positions 20–98 (DDLAAQVTYL…KEEIDRLAQP (79 aa)) form a coiled coil. 282 to 287 (GCGKTL) serves as a coordination point for ATP. The interval 593–594 (YL) is docks into pockets in the proteasome alpha-ring.

Belongs to the AAA ATPase family. As to quaternary structure, homohexamer. Assembles into a hexameric ring structure that caps the 20S proteasome core. Strongly interacts with the prokaryotic ubiquitin-like protein Pup through a hydrophobic interface; the interacting region of ARC lies in its N-terminal coiled-coil domain. There is one Pup binding site per ARC hexamer ring. Upon ATP-binding, the C-terminus of ARC interacts with the alpha-rings of the proteasome core, possibly by binding to the intersubunit pockets.

Its pathway is protein degradation; proteasomal Pup-dependent pathway. In terms of biological role, ATPase which is responsible for recognizing, binding, unfolding and translocation of pupylated proteins into the bacterial 20S proteasome core particle. May be essential for opening the gate of the 20S proteasome via an interaction with its C-terminus, thereby allowing substrate entry and access to the site of proteolysis. Thus, the C-termini of the proteasomal ATPase may function like a 'key in a lock' to induce gate opening and therefore regulate proteolysis. This chain is Proteasome-associated ATPase, found in Catenulispora acidiphila (strain DSM 44928 / JCM 14897 / NBRC 102108 / NRRL B-24433 / ID139908).